The primary structure comprises 637 residues: 1-deoxy-D-xylulose-5-phosphate synthase (637 aa).

Thiamine diphosphate contacts are provided by residues His76 and 117-119 (AHS). Asp148 contacts Mg(2+). Thiamine diphosphate contacts are provided by residues 149–150 (GA), Asn177, Tyr287, and Glu369. Asn177 provides a ligand contact to Mg(2+).

This sequence belongs to the transketolase family. DXPS subfamily. Homodimer. The cofactor is Mg(2+). Thiamine diphosphate serves as cofactor.

The enzyme catalyses D-glyceraldehyde 3-phosphate + pyruvate + H(+) = 1-deoxy-D-xylulose 5-phosphate + CO2. Its pathway is metabolic intermediate biosynthesis; 1-deoxy-D-xylulose 5-phosphate biosynthesis; 1-deoxy-D-xylulose 5-phosphate from D-glyceraldehyde 3-phosphate and pyruvate: step 1/1. Its function is as follows. Catalyzes the acyloin condensation reaction between C atoms 2 and 3 of pyruvate and glyceraldehyde 3-phosphate to yield 1-deoxy-D-xylulose-5-phosphate (DXP). The protein is 1-deoxy-D-xylulose-5-phosphate synthase of Pelagibacter ubique (strain HTCC1062).